A 244-amino-acid polypeptide reads, in one-letter code: MLQNIRIVLVETSHTGNMGSVARAMKTMGLTNLWLVNPLVKPDSQAIALAAGASDVIGNAQIVDTLDEALAGCSLVVGTSARSRTLPWPMLDPRECGLKSVAEGQHAPVALVFGRERVGLTNDELQKCHYHVAIAANPEYSSLNLAMAVQVIAYEVRMAWLAAQEQAQPAVEHEEAPYPLVDDLERFYDHLEQTLLATGFIRPNHPGQVMNKLRRLFTRARPESQELNILRGMLASIEQQNKGK.

S-adenosyl-L-methionine-binding positions include 79–81, glycine 114, isoleucine 134, and 141–143; these read TSA and SSL.

The protein belongs to the class IV-like SAM-binding methyltransferase superfamily. RNA methyltransferase TrmH family. Homodimer.

Its subcellular location is the cytoplasm. The enzyme catalyses cytidine(32) in tRNA + S-adenosyl-L-methionine = 2'-O-methylcytidine(32) in tRNA + S-adenosyl-L-homocysteine + H(+). It catalyses the reaction uridine(32) in tRNA + S-adenosyl-L-methionine = 2'-O-methyluridine(32) in tRNA + S-adenosyl-L-homocysteine + H(+). Functionally, catalyzes the formation of 2'O-methylated cytidine (Cm32) or 2'O-methylated uridine (Um32) at position 32 in tRNA. This chain is tRNA (cytidine/uridine-2'-O-)-methyltransferase TrmJ (trmJ), found in Klebsiella pneumoniae subsp. pneumoniae (strain ATCC 700721 / MGH 78578).